A 159-amino-acid chain; its full sequence is Succinate dehydrogenase [ubiquinone] cytochrome b small subunit, mitochondrial (159 aa).

The transit peptide at 1-56 (MAVLLKLGVLCSGQGARALLLRSRVVRPAYVSAFLQDQPTQGRCGTQHIHLSPSHH) directs the protein to the mitochondrion. Topologically, residues 57–63 (SGSKAAS) are mitochondrial matrix. Residues 64–85 (LHWTSERVVSVLLLGLIPAGYL) form a helical membrane-spanning segment. The Mitochondrial intermembrane portion of the chain corresponds to 86-90 (NPCSV). The chain crosses the membrane as a helical span at residues 91–111 (VDYSLAAALTLHSHWGLGQVV). H102 provides a ligand contact to heme b. Residues 112–120 (TDYVHGDTL) lie on the Mitochondrial matrix side of the membrane. Y114 serves as a coordination point for a ubiquinone. Residues 121-142 (PKAARAGLLALSALTFAGLCYF) traverse the membrane as a helical segment. Topologically, residues 143–159 (NYHDVGICRAVAMLWKL) are mitochondrial intermembrane.

The protein belongs to the CybS family. In terms of assembly, component of complex II composed of four subunits: the flavoprotein (FP) SDHA, iron-sulfur protein (IP) SDHB, and a cytochrome b560 composed of SDHC and SDHD.

The protein localises to the mitochondrion inner membrane. It participates in carbohydrate metabolism; tricarboxylic acid cycle. In terms of biological role, membrane-anchoring subunit of succinate dehydrogenase (SDH) that is involved in complex II of the mitochondrial electron transport chain and is responsible for transferring electrons from succinate to ubiquinone (coenzyme Q). SDH also oxidizes malate to the non-canonical enol form of oxaloacetate, enol-oxaloacetate. Enol-oxaloacetate, which is a potent inhibitor of the succinate dehydrogenase activity, is further isomerized into keto-oxaloacetate. The chain is Succinate dehydrogenase [ubiquinone] cytochrome b small subunit, mitochondrial (Sdhd) from Mus musculus (Mouse).